A 160-amino-acid polypeptide reads, in one-letter code: FMRFamide-like neuropeptides 13 (160 aa).

The first 17 residues, 1 to 17 (MMTSLLTISMFVVAIQA), serve as a signal peptide directing secretion. Positions 18-43 (FDSSEIRMLDEQYDTKNPFFQFLENS) are excised as a propeptide. Phenylalanine amide is present on residues F60, F73, F85, F98, F110, F123, F135, F146, and F157.

Belongs to the FARP (FMRFamide related peptide) family. Expressed in the ASE sensory neurons, the DD motor neurons, the 15, M3 and M5 cholinergic pharyngeal motoneurons, and the ASG, ASK and BAG neurons.

It is found in the secreted. Functionally, probable FMRFamide-like neuropeptides. Binds to neuronal receptors such as dmsr-1 to promote sleep in response to cellular stress also known as stress-induced sleep (SIS). Plays a role in behaviors associated with SIS, acting in concert with the FMRFamide related peptide, flp-24 and neuropeptide-like protein nlp-8. In terms of biological role, AADGAPLIRF-amide: Inhibits muscle tension in somatic muscle. Acts as a ligand for the npr-22 receptor in vitro. Acts as a ligand for isoform a of the dmsr-1 G-protein coupled receptor in vitro. APEASPFIRF-amide: Inhibits muscle tension in somatic muscle. Potent inhibitor of the activity of the dissected pharyngeal myogenic muscle system. Acts as a ligand for isoform a of the dmsr-1 G-protein coupled receptor in vitro. Its function is as follows. Acts as a ligand for the npr-22 receptor in vitro. Acts as a ligand for isoform a of the dmsr-1 G-protein coupled receptor in vitro. Functionally, acts as a ligand for isoform a of the dmsr-1 G-protein coupled receptor in vitro. The polypeptide is FMRFamide-like neuropeptides 13 (Caenorhabditis elegans).